The following is a 290-amino-acid chain: MYG1 protein CPn_0489/CP_0265/CPj0489/CpB0509 (290 aa).

It belongs to the MYG1 family.

In Chlamydia pneumoniae (Chlamydophila pneumoniae), this protein is MYG1 protein CPn_0489/CP_0265/CPj0489/CpB0509.